We begin with the raw amino-acid sequence, 343 residues long: KRR1 small subunit processome component homolog (343 aa).

The 69-residue stretch at 125 to 193 folds into the KH domain; that stretch reads DIIKIGNLVH…VRDIVVETMN (69 aa). Residues 232–245 are compositionally biased toward basic residues; it reads NISKRKQPKVKKAK. The segment at 232-343 is disordered; it reads NISKRKQPKV…KLLKANKKKV (112 aa). Residues 270–302 adopt a coiled-coil conformation; sequence FLNKEQKQAKRQQERSAKQADAAKRQDERRNKD. Residues 271–302 show a composition bias toward basic and acidic residues; that stretch reads LNKEQKQAKRQQERSAKQADAAKRQDERRNKD. Basic residues predominate over residues 331–343; sequence LKAKLLKANKKKV.

It belongs to the KRR1 family. As to quaternary structure, monomer. Component of the ribosomal small subunit (SSU) processome.

Its subcellular location is the nucleus. It is found in the nucleolus. Functionally, required for 40S ribosome biogenesis. Involved in nucleolar processing of pre-18S ribosomal RNA and ribosome assembly. Binds to RNA. Required for female germline development, cell viability during eye development and for survival of dividing cells and epithelial cells during early wing disk development. This chain is KRR1 small subunit processome component homolog, found in Drosophila ananassae (Fruit fly).